The sequence spans 377 residues: UPF0754 membrane protein LMOf2365_2257 (377 aa).

The next 2 membrane-spanning stretches (helical) occupy residues 1-21 (MSVL…GAMT) and 357-377 (YLGG…AMWI).

This sequence belongs to the UPF0754 family.

The protein resides in the cell membrane. The polypeptide is UPF0754 membrane protein LMOf2365_2257 (Listeria monocytogenes serotype 4b (strain F2365)).